Reading from the N-terminus, the 128-residue chain is Ribonuclease P protein component (128 aa).

The protein belongs to the RnpA family. In terms of assembly, consists of a catalytic RNA component (M1 or rnpB) and a protein subunit.

The enzyme catalyses Endonucleolytic cleavage of RNA, removing 5'-extranucleotides from tRNA precursor.. Functionally, RNaseP catalyzes the removal of the 5'-leader sequence from pre-tRNA to produce the mature 5'-terminus. It can also cleave other RNA substrates such as 4.5S RNA. The protein component plays an auxiliary but essential role in vivo by binding to the 5'-leader sequence and broadening the substrate specificity of the ribozyme. In Prochlorococcus marinus (strain NATL1A), this protein is Ribonuclease P protein component.